Consider the following 564-residue polypeptide: Arginine--tRNA ligase (564 aa).

Positions 124–134 (PNIAKDMHVGH) match the 'HIGH' region motif.

It belongs to the class-I aminoacyl-tRNA synthetase family. Monomer.

Its subcellular location is the cytoplasm. It catalyses the reaction tRNA(Arg) + L-arginine + ATP = L-arginyl-tRNA(Arg) + AMP + diphosphate. This is Arginine--tRNA ligase from Chlamydia caviae (strain ATCC VR-813 / DSM 19441 / 03DC25 / GPIC) (Chlamydophila caviae).